A 257-amino-acid chain; its full sequence is Snake venom serine protease KN3 (257 aa).

Residues 1–18 (MVLIRVLANLLILQLSYA) form the signal peptide. Positions 19 to 24 (QKSSKL) are excised as a propeptide. Residues 25–248 (VVGGDECNIN…HLDWIKSIIA (224 aa)) enclose the Peptidase S1 domain. 6 cysteine pairs are disulfide-bonded: Cys31–Cys162, Cys49–Cys65, Cys97–Cys255, Cys141–Cys209, Cys173–Cys188, and Cys199–Cys224. Residues His64 and Asp109 each act as charge relay system in the active site. N-linked (GlcNAc...) asparagine glycans are attached at residues Asn120, Asn121, and Asn164. The active-site Charge relay system is Ser203.

The protein belongs to the peptidase S1 family. Snake venom subfamily. Monomer. In terms of tissue distribution, expressed by the venom gland.

It localises to the secreted. Functionally, snake venom serine protease that may act in the hemostasis system of the prey. This chain is Snake venom serine protease KN3, found in Trimeresurus stejnegeri (Chinese green tree viper).